The following is a 225-amino-acid chain: NAD(P)H-quinone oxidoreductase subunit K, chloroplastic (225 aa).

4 residues coordinate [4Fe-4S] cluster: cysteine 43, cysteine 44, cysteine 108, and cysteine 139.

The protein belongs to the complex I 20 kDa subunit family. In terms of assembly, NDH is composed of at least 16 different subunits, 5 of which are encoded in the nucleus. [4Fe-4S] cluster serves as cofactor.

The protein resides in the plastid. It localises to the chloroplast thylakoid membrane. It catalyses the reaction a plastoquinone + NADH + (n+1) H(+)(in) = a plastoquinol + NAD(+) + n H(+)(out). The catalysed reaction is a plastoquinone + NADPH + (n+1) H(+)(in) = a plastoquinol + NADP(+) + n H(+)(out). Its function is as follows. NDH shuttles electrons from NAD(P)H:plastoquinone, via FMN and iron-sulfur (Fe-S) centers, to quinones in the photosynthetic chain and possibly in a chloroplast respiratory chain. The immediate electron acceptor for the enzyme in this species is believed to be plastoquinone. Couples the redox reaction to proton translocation, and thus conserves the redox energy in a proton gradient. The chain is NAD(P)H-quinone oxidoreductase subunit K, chloroplastic from Atropa belladonna (Belladonna).